A 392-amino-acid polypeptide reads, in one-letter code: MQSPAVLVTSRRLQNAHTGLDLTVPQHQEVRGKMMSGHVEYQILVVTRLAAFKSAKHRPEDVVQFLVSKKYSEIEEFYQKLSSRYAAASLPPLPRKVLFVGESDIRERRAVFNEILRCVSKDAELAGSPELLEFLGTRSPGAAGLTSRDSSVLDGTDSQTGNDEEAFDFFEEQDQVAEEGPPVQSLKGEDAEESLEEEEALDPLGIMRSKKPKKHPKVAVKAKPSPRLTIFDEEVDPDEGLFGPGRKLSPQDPSEDVSSVDPLKLFDDPDLGGAIPLGDSLLLPAACESGGPTPSLSHRDASKELFRVEEDLDQILNLGAEPKPKPQLKPKPPVAAKPVIPRKPAVPPKAGPAEAVAGQQKPQEQIQAMDEMDILQYIQDHDTPAQAAPSLF.

M1 bears the N-acetylmethionine mark. Phosphoserine occurs at positions 3, 139, and 194. The PX domain maps to 19-142 (GLDLTVPQHQ…EFLGTRSPGA (124 aa)). 3 disordered regions span residues 138–162 (RSPG…QTGN), 174–265 (DQVA…PLKL), and 319–364 (GAEP…KPQE). Residues 190–201 (DAEESLEEEEAL) are compositionally biased toward acidic residues. Basic residues predominate over residues 208–220 (RSKKPKKHPKVAV). Phosphoserine is present on S249. Pro residues predominate over residues 325-335 (KPQLKPKPPVA). K337 carries the N6-acetyllysine modification.

As to quaternary structure, binds HCLS1. Interacts with the SH3 domain of HCLS1 in vitro.

May be a modulator of IL-2 signaling. The polypeptide is HCLS1-binding protein 3 (HS1BP3) (Homo sapiens (Human)).